The sequence spans 993 residues: Desmoglein-3 (993 aa).

Residues 1–23 (MTWLLFRTSGALAILMVLILVHG) form the signal peptide. Positions 24-48 (ELRIETKGQHGEDETAIQGRRRYKR) are excised as a propeptide. Cadherin domains lie at 48-156 (REWV…APVF), 157-266 (SQSI…FPMF), 267-386 (KESQ…HPAS), and 383-494 (HPAS…CPTV). Over 49–617 (EWVKFAKPCR…GKRPSGRLGS (569 aa)) the chain is Extracellular. N-linked (GlcNAc...) asparagine glycosylation is found at N109 and N179. Residues N458 and N544 are each glycosylated (N-linked (GlcNAc...) asparagine). The helical transmembrane segment at 618 to 638 (AAIGLLLLGLLLLLLAPLLLL) threads the bilayer. At 639 to 993 (TCDYGVGPIG…CTEDPCSRLI (355 aa)) the chain is on the cytoplasmic side. The required for interaction with CTNND1 and localization at cell-cell junctions stretch occupies residues 641–713 (DYGVGPIGGV…NTYAGGTVVE (73 aa)). Desmoglein repeat repeat units lie at residues 903-929 (LSAS…MVTE) and 930-960 (TYSA…ERVI).

In terms of assembly, homodimer. Part of a complex that contains DSG3, PKP1, YAP1 and YWHAG; the complex is required for localization of DSG3 and YAP1 to the cell membrane in keratinocytes. Interacts with PKP2. Interacts with CTNND1; the interaction facilitates DSG3 localization and retention at cell-cell junctions. Interacts with CDH1; the interaction is required for CDH1 localization to developing adherens junctions. Interacts with RAC1; the interaction is required for DSG3 translocation to cell-cell junctions, organization of cortical F-actin bundles and actin anchoring at cell-cell junctions. Interacts with DSC3; the interaction may limit the interaction of DSC3 with p38MAPK family members and therefore repress p38MAPK signaling activation.

It is found in the cell membrane. It localises to the cell junction. The protein localises to the desmosome. The protein resides in the cytoplasm. Its subcellular location is the tight junction. Its function is as follows. A component of desmosome cell-cell junctions which are required for positive regulation of cellular adhesion. Required for adherens and desmosome junction assembly in response to mechanical force in keratinocytes. Required for desmosome-mediated cell-cell adhesion of cells surrounding the telogen hair club and the basal layer of the outer root sheath epithelium, consequently is essential for the anchoring of telogen hairs in the hair follicle. Required for the maintenance of the epithelial barrier via promoting desmosome-mediated intercellular attachment of suprabasal epithelium to basal cells. May play a role in the protein stability of the desmosome plaque components DSP, JUP, PKP1, PKP2 and PKP3. Required for YAP1 localization at the plasma membrane in keratinocytes in response to mechanical strain, via the formation of an interaction complex composed of DSG3, PKP1 and YWHAG. May also be involved in the positive regulation of YAP1 target gene transcription and as a result cell proliferation. Positively regulates cellular contractility and cell junction formation via organization of cortical F-actin bundles and anchoring of actin to tight junctions, in conjunction with RAC1. The cytoplasmic pool of DSG3 is required for the localization of CDH1 and CTNNB1 at developing adherens junctions, potentially via modulation of SRC activity. Inhibits keratinocyte migration via suppression of p38MAPK signaling, may therefore play a role in moderating wound healing. In Canis lupus familiaris (Dog), this protein is Desmoglein-3 (DSG3).